The sequence spans 243 residues: Cell division protein ZipA (243 aa).

Over 1–4 (MSDM) the chain is Periplasmic. A helical membrane pass occupies residues 5-25 (AMIRIGILIAGLLLVAAIFLF). Over 26–243 (GRPKKSPQGR…APPLTKSPRW (218 aa)) the chain is Cytoplasmic. Positions 30-89 (KSPQGRRVDKDEGQPRERREPVISSEFGVEDDAAERAEGVEQSELNLEGQDASGGNEVGK) are disordered. Positions 35–50 (RRVDKDEGQPRERREP) are enriched in basic and acidic residues.

The protein belongs to the ZipA family. In terms of assembly, interacts with FtsZ via their C-terminal domains.

The protein resides in the cell inner membrane. Essential cell division protein that stabilizes the FtsZ protofilaments by cross-linking them and that serves as a cytoplasmic membrane anchor for the Z ring. Also required for the recruitment to the septal ring of downstream cell division proteins. The protein is Cell division protein ZipA of Xanthomonas euvesicatoria pv. vesicatoria (strain 85-10) (Xanthomonas campestris pv. vesicatoria).